We begin with the raw amino-acid sequence, 418 residues long: AP-3 complex subunit mu-1 (418 aa).

An MHD domain is found at 176-417 (NNEAYFDVVE…VTKAGKFQVR (242 aa)).

This sequence belongs to the adaptor complexes medium subunit family. Adaptor protein complex 3 (AP-3) is a heterotetramer composed of two large adaptins (delta-type subunit AP3D1 and beta-type subunit AP3B1 or AP3B2), a medium adaptin (mu-type subunit AP3M1 or AP3M2) and a small adaptin (sigma-type subunit APS1 or AP3S2). Interacts with AGAP1. AP-3 associates with the BLOC-1 complex. In terms of assembly, (Microbial infection) Interacts with human respiratory virus (HRSV) matrix protein; this interaction plays an essential role in trafficking the matrix protein in host cells.

It is found in the golgi apparatus. Its subcellular location is the cytoplasmic vesicle membrane. Functionally, part of the AP-3 complex, an adaptor-related complex which is not clathrin-associated. The complex is associated with the Golgi region as well as more peripheral structures. It facilitates the budding of vesicles from the Golgi membrane and may be directly involved in trafficking to lysosomes. In concert with the BLOC-1 complex, AP-3 is required to target cargos into vesicles assembled at cell bodies for delivery into neurites and nerve terminals. This Homo sapiens (Human) protein is AP-3 complex subunit mu-1 (AP3M1).